The chain runs to 295 residues: Histamine N-methyltransferase (295 aa).

Glu28 contributes to the substrate binding site. Residues Gly60, Glu89, Gln94, Ser120, and Ile143 each contribute to the S-adenosyl-L-methionine site. Asn284 contacts substrate.

Belongs to the class I-like SAM-binding methyltransferase superfamily. HNMT family. As to quaternary structure, monomer.

It localises to the cytoplasm. The catalysed reaction is histamine + S-adenosyl-L-methionine = N(tau)-methylhistamine + S-adenosyl-L-homocysteine + H(+). In terms of biological role, inactivates histamine by N-methylation. Plays an important role in degrading histamine and in regulating the airway response to histamine. The polypeptide is Histamine N-methyltransferase (Hnmt) (Mus musculus (Mouse)).